A 306-amino-acid chain; its full sequence is Methionyl-tRNA formyltransferase (306 aa).

108-111 contributes to the (6S)-5,6,7,8-tetrahydrofolate binding site; sequence SLLP.

Belongs to the Fmt family.

The catalysed reaction is L-methionyl-tRNA(fMet) + (6R)-10-formyltetrahydrofolate = N-formyl-L-methionyl-tRNA(fMet) + (6S)-5,6,7,8-tetrahydrofolate + H(+). Its function is as follows. Attaches a formyl group to the free amino group of methionyl-tRNA(fMet). The formyl group appears to play a dual role in the initiator identity of N-formylmethionyl-tRNA by promoting its recognition by IF2 and preventing the misappropriation of this tRNA by the elongation apparatus. This chain is Methionyl-tRNA formyltransferase, found in Pseudarthrobacter chlorophenolicus (strain ATCC 700700 / DSM 12829 / CIP 107037 / JCM 12360 / KCTC 9906 / NCIMB 13794 / A6) (Arthrobacter chlorophenolicus).